A 159-amino-acid chain; its full sequence is Ribosomal RNA large subunit methyltransferase H (159 aa).

S-adenosyl-L-methionine is bound by residues Leu-76, Gly-108, and 127–132; that span reads FSKMTF.

The protein belongs to the RNA methyltransferase RlmH family. Homodimer.

The protein resides in the cytoplasm. The catalysed reaction is pseudouridine(1915) in 23S rRNA + S-adenosyl-L-methionine = N(3)-methylpseudouridine(1915) in 23S rRNA + S-adenosyl-L-homocysteine + H(+). Specifically methylates the pseudouridine at position 1915 (m3Psi1915) in 23S rRNA. This chain is Ribosomal RNA large subunit methyltransferase H, found in Oceanobacillus iheyensis (strain DSM 14371 / CIP 107618 / JCM 11309 / KCTC 3954 / HTE831).